A 205-amino-acid chain; its full sequence is Putative 3-methyladenine DNA glycosylase (205 aa).

Belongs to the DNA glycosylase MPG family.

This Bacillus cereus (strain G9842) protein is Putative 3-methyladenine DNA glycosylase.